A 205-amino-acid polypeptide reads, in one-letter code: Probable nicotinate-nucleotide adenylyltransferase (205 aa).

It belongs to the NadD family.

It catalyses the reaction nicotinate beta-D-ribonucleotide + ATP + H(+) = deamido-NAD(+) + diphosphate. Its pathway is cofactor biosynthesis; NAD(+) biosynthesis; deamido-NAD(+) from nicotinate D-ribonucleotide: step 1/1. In terms of biological role, catalyzes the reversible adenylation of nicotinate mononucleotide (NaMN) to nicotinic acid adenine dinucleotide (NaAD). The polypeptide is Probable nicotinate-nucleotide adenylyltransferase (Arthrobacter sp. (strain FB24)).